A 180-amino-acid chain; its full sequence is ATP-dependent protease subunit HslV (180 aa).

Thr8 is a catalytic residue. Na(+)-binding residues include Ala165, Cys168, and Thr171.

The protein belongs to the peptidase T1B family. HslV subfamily. In terms of assembly, a double ring-shaped homohexamer of HslV is capped on each side by a ring-shaped HslU homohexamer. The assembly of the HslU/HslV complex is dependent on binding of ATP.

The protein resides in the cytoplasm. It carries out the reaction ATP-dependent cleavage of peptide bonds with broad specificity.. Its activity is regulated as follows. Allosterically activated by HslU binding. Its function is as follows. Protease subunit of a proteasome-like degradation complex believed to be a general protein degrading machinery. The protein is ATP-dependent protease subunit HslV of Staphylococcus epidermidis (strain ATCC 12228 / FDA PCI 1200).